A 332-amino-acid chain; its full sequence is 2,3-diketo-L-gulonate reductase (332 aa).

Histidine 44 functions as the Proton donor in the catalytic mechanism. NAD(+)-binding positions include 168–174 (ITMVDMS), 224–225 (WK), and 304–306 (GHE).

Belongs to the LDH2/MDH2 oxidoreductase family. DlgD subfamily. As to quaternary structure, homodimer.

It is found in the cytoplasm. It catalyses the reaction 3-dehydro-L-gulonate + NAD(+) = 2,3-dioxo-L-gulonate + NADH + H(+). The catalysed reaction is 3-dehydro-L-gulonate + NADP(+) = 2,3-dioxo-L-gulonate + NADPH + H(+). Catalyzes the reduction of 2,3-diketo-L-gulonate in the presence of NADH, to form 3-keto-L-gulonate. The polypeptide is 2,3-diketo-L-gulonate reductase (Klebsiella oxytoca).